Here is a 381-residue protein sequence, read N- to C-terminus: ADP,ATP carrier protein 1, mitochondrial (381 aa).

The N-terminal 70 residues, 1–70, are a transit peptide targeting the mitochondrion; that stretch reads MVDQVQHPTI…ATTASPVFVQ (70 aa). 3 Solcar repeats span residues 78–171, 183–276, and 284–370; these read TNFA…FKRL, KWFA…VKPV, and DSFF…LQLI. A run of 5 helical transmembrane segments spans residues 80-107, 148-172, 181-201, 252-273, and 287-307; these read FALD…VKLL, TANV…KRLF, YWKW…SSLL, FNIS…YDSV, and FASF…SYPI. ADP contacts are provided by R153 and K165. Residue R311 participates in ADP binding. Positions 311 to 316 are important for transport activity; sequence RRRMMM. A Nucleotide carrier signature motif motif is present at residues 311–316; the sequence is RRRMMM. The helical transmembrane segment at 347 to 367 threads the bilayer; sequence AGANILRAVAGAGVLSGYDKL.

It belongs to the mitochondrial carrier (TC 2.A.29) family. Monomer.

Its subcellular location is the mitochondrion inner membrane. The catalysed reaction is ADP(in) + ATP(out) = ADP(out) + ATP(in). With respect to regulation, the matrix-open state (m-state) is inhibited by the membrane-permeable bongkrekic acid (BKA). The cytoplasmic-open state (c-state) is inhibited by the membrane-impermeable toxic inhibitor carboxyatractyloside (CATR). Its function is as follows. ADP:ATP antiporter that mediates import of ADP into the mitochondrial matrix for ATP synthesis, and export of ATP out to fuel the cell. Cycles between the cytoplasmic-open state (c-state) and the matrix-open state (m-state): operates by the alternating access mechanism with a single substrate-binding site intermittently exposed to either the cytosolic (c-state) or matrix (m-state) side of the inner mitochondrial membrane. The polypeptide is ADP,ATP carrier protein 1, mitochondrial (AAC1) (Arabidopsis thaliana (Mouse-ear cress)).